The chain runs to 383 residues: Putative glutamate--cysteine ligase 2 (383 aa).

This sequence belongs to the glutamate--cysteine ligase type 2 family. YbdK subfamily.

The catalysed reaction is L-cysteine + L-glutamate + ATP = gamma-L-glutamyl-L-cysteine + ADP + phosphate + H(+). In terms of biological role, ATP-dependent carboxylate-amine ligase which exhibits weak glutamate--cysteine ligase activity. The polypeptide is Putative glutamate--cysteine ligase 2 (Clavibacter michiganensis subsp. michiganensis (strain NCPPB 382)).